The sequence spans 1434 residues: Gag-Pol polyprotein (1434 aa).

The N-myristoyl glycine; by host moiety is linked to residue Gly-2. An interaction with Gp41 region spans residues 7–31; it reads VLSGGELDKWEKIRLRPGGKKKYQL. Residues 8 to 43 are interaction with host CALM1; it reads LSGGELDKWEKIRLRPGGKKKYQLKHIVWASRELER. Residues 12-19 form an interaction with host AP3D1 region; it reads ELDKWEKI. The interval 14–33 is interaction with membrane phosphatidylinositol 4,5-bisphosphate and RNA; that stretch reads DKWEKIRLRPGGKKKYQLKH. Positions 16–22 match the Nuclear export signal motif; sequence WEKIRLR. Residues 26-32 carry the Nuclear localization signal motif; the sequence is KKKYQLK. The tract at residues 73-77 is interaction with membrane phosphatidylinositol 4,5-bisphosphate; that stretch reads EEIRS. The interval 106 to 128 is disordered; that stretch reads EEQNKSKKKAQQTAADTGNSSQV. Over residues 116–128 the composition is skewed to polar residues; sequence QQTAADTGNSSQV. The residue at position 132 (Tyr-132) is a Phosphotyrosine; by host. Residues 189-227 are interaction with human PPIA/CYPA and NUP153; that stretch reads NTVGGHQAAMQMLKETINEEAAEWDRLHPVHAGPIAPGQ. Residues 277-363 form a dimerization/Multimerization of capsid protein p24 region; sequence YSPTSILDIR…GGPGHKARVL (87 aa). 2 CCHC-type zinc fingers span residues 389–406 and 410–427; these read VKCFNCGKEGHIAKNCRA and KGCWKCGREGHQMKDCTE. Residues 443 to 480 are disordered; it reads KAREFSSEQTRANSPTSRELRVWGRDNNSPSEAGADRQ. Polar residues predominate over residues 449 to 459; the sequence is SEQTRANSPTS. The tract at residues 488–492 is dimerization of protease; sequence PQITL. The region spanning 507–576 is the Peptidase A2 domain; it reads KEALLDTGAD…TPVNIIGRNL (70 aa). Asp-512 functions as the For protease activity; shared with dimeric partner in the catalytic mechanism. Dimerization of protease regions lie at residues 536 to 542 and 575 to 587; these read GIGGFIK and NLLTQLGCTLNFP. The 191-residue stretch at 630 to 820 folds into the Reverse transcriptase domain; sequence EGKISKVGPE…PPFLWMGYEL (191 aa). Mg(2+) contacts are provided by Asp-696, Asp-771, and Asp-772. Positions 813 to 821 are RT 'primer grip'; that stretch reads FLWMGYELH. A Tryptophan repeat motif motif is present at residues 984-1000; it reads WEAWWTEYWQATWIPEW. The 124-residue stretch at 1020–1143 folds into the RNase H type-1 domain; the sequence is IVGAETFYVD…VDKLVSAGIR (124 aa). Mg(2+) is bound by residues Asp-1029, Glu-1064, Asp-1084, and Asp-1135. The segment at 1149 to 1190 adopts an Integrase-type zinc-finger fold; sequence DGIDKAQEEHEKYHSNWRAMASDFNLPPVVAKEIVASCDKCQ. His-1158, His-1162, Cys-1186, and Cys-1189 together coordinate Zn(2+). One can recognise an Integrase catalytic domain in the interval 1200 to 1350; sequence VDCSPGIWQL…SAGERIVDII (151 aa). Residues Asp-1210, Asp-1262, and Glu-1298 each coordinate Mg(2+). A DNA-binding region (integrase-type) is located at residues 1369-1416; it reads FRVYYRDSREPLWKGPAKLLWKGEGAVVIQDNSDIKVVPRRKAKIIRD.

In terms of assembly, homotrimer; further assembles as hexamers of trimers. Interacts with gp41 (via C-terminus). Interacts with host CALM1; this interaction induces a conformational change in the Matrix protein, triggering exposure of the myristate group. Interacts with host AP3D1; this interaction allows the polyprotein trafficking to multivesicular bodies during virus assembly. Part of the pre-integration complex (PIC) which is composed of viral genome, matrix protein, Vpr and integrase. As to quaternary structure, homodimer; the homodimer further multimerizes as homohexamers or homopentamers. Interacts with human PPIA/CYPA; This interaction stabilizes the capsid. Interacts with human NUP153. Interacts with host PDZD8; this interaction stabilizes the capsid. Interacts with monkey TRIM5; this interaction destabilizes the capsid. Homodimer, whose active site consists of two apposed aspartic acid residues. In terms of assembly, heterodimer of p66 RT and p51 RT (RT p66/p51). Heterodimerization of RT is essential for DNA polymerase activity. The overall folding of the subdomains is similar in p66 RT and p51 RT but the spatial arrangements of the subdomains are dramatically different. As to quaternary structure, homotetramer; may further associate as a homohexadecamer. Part of the pre-integration complex (PIC) which is composed of viral genome, matrix protein, Vpr and integrase. Interacts with human SMARCB1/INI1 and human PSIP1/LEDGF isoform 1. Interacts with human KPNA3; this interaction might play a role in nuclear import of the pre-integration complex. Interacts with human NUP153; this interaction might play a role in nuclear import of the pre-integration complex. Requires Mg(2+) as cofactor. In terms of processing, specific enzymatic cleavages by the viral protease yield mature proteins. The protease is released by autocatalytic cleavage. The polyprotein is cleaved during and after budding, this process is termed maturation. Proteolytic cleavage of p66 RT removes the RNase H domain to yield the p51 RT subunit. Nucleocapsid protein p7 might be further cleaved after virus entry. Tyrosine phosphorylated presumably in the virion by a host kinase. Phosphorylation is apparently not a major regulator of membrane association. Post-translationally, phosphorylated possibly by host MAPK1; this phosphorylation is necessary for Pin1-mediated virion uncoating. In terms of processing, methylated by host PRMT6, impairing its function by reducing RNA annealing and the initiation of reverse transcription.

Its subcellular location is the host cell membrane. It localises to the host endosome. It is found in the host multivesicular body. The protein localises to the virion membrane. The protein resides in the host nucleus. Its subcellular location is the host cytoplasm. It localises to the virion. The enzyme catalyses Specific for a P1 residue that is hydrophobic, and P1' variable, but often Pro.. The catalysed reaction is Endohydrolysis of RNA in RNA/DNA hybrids. Three different cleavage modes: 1. sequence-specific internal cleavage of RNA. Human immunodeficiency virus type 1 and Moloney murine leukemia virus enzymes prefer to cleave the RNA strand one nucleotide away from the RNA-DNA junction. 2. RNA 5'-end directed cleavage 13-19 nucleotides from the RNA end. 3. DNA 3'-end directed cleavage 15-20 nucleotides away from the primer terminus.. It carries out the reaction 3'-end directed exonucleolytic cleavage of viral RNA-DNA hybrid.. It catalyses the reaction DNA(n) + a 2'-deoxyribonucleoside 5'-triphosphate = DNA(n+1) + diphosphate. With respect to regulation, protease: The viral protease is inhibited by many synthetic protease inhibitors (PIs), such as amprenavir, atazanavir, indinavir, loprinavir, nelfinavir, ritonavir and saquinavir. Use of protease inhibitors in tritherapy regimens permit more ambitious therapeutic strategies. Reverse transcriptase/ribonuclease H: RT can be inhibited either by nucleoside RT inhibitors (NRTIs) or by non nucleoside RT inhibitors (NNRTIs). NRTIs act as chain terminators, whereas NNRTIs inhibit DNA polymerization by binding a small hydrophobic pocket near the RT active site and inducing an allosteric change in this region. Classical NRTIs are abacavir, adefovir (PMEA), didanosine (ddI), lamivudine (3TC), stavudine (d4T), tenofovir (PMPA), zalcitabine (ddC), and zidovudine (AZT). Classical NNRTIs are atevirdine (BHAP U-87201E), delavirdine, efavirenz (DMP-266), emivirine (I-EBU), and nevirapine (BI-RG-587). The tritherapies used as a basic effective treatment of AIDS associate two NRTIs and one NNRTI. Mediates, with Gag polyprotein, the essential events in virion assembly, including binding the plasma membrane, making the protein-protein interactions necessary to create spherical particles, recruiting the viral Env proteins, and packaging the genomic RNA via direct interactions with the RNA packaging sequence (Psi). Gag-Pol polyprotein may regulate its own translation, by the binding genomic RNA in the 5'-UTR. At low concentration, the polyprotein would promote translation, whereas at high concentration, the polyprotein would encapsidate genomic RNA and then shut off translation. Its function is as follows. Targets the polyprotein to the plasma membrane via a multipartite membrane-binding signal, that includes its myristoylated N-terminus. Matrix protein is part of the pre-integration complex. Implicated in the release from host cell mediated by Vpu. Binds to RNA. In terms of biological role, forms the conical core that encapsulates the genomic RNA-nucleocapsid complex in the virion. Most core are conical, with only 7% tubular. The core is constituted by capsid protein hexamer subunits. The core is disassembled soon after virion entry. Host restriction factors such as TRIM5-alpha or TRIMCyp bind retroviral capsids and cause premature capsid disassembly, leading to blocks in reverse transcription. Capsid restriction by TRIM5 is one of the factors which restricts HIV-1 to the human species. Host PIN1 apparently facilitates the virion uncoating. On the other hand, interactions with PDZD8 or CYPA stabilize the capsid. Functionally, encapsulates and protects viral dimeric unspliced genomic RNA (gRNA). Binds these RNAs through its zinc fingers. Acts as a nucleic acid chaperone which is involved in rearangement of nucleic acid secondary structure during gRNA retrotranscription. Also facilitates template switch leading to recombination. As part of the polyprotein, participates in gRNA dimerization, packaging, tRNA incorporation and virion assembly. Aspartyl protease that mediates proteolytic cleavages of Gag and Gag-Pol polyproteins during or shortly after the release of the virion from the plasma membrane. Cleavages take place as an ordered, step-wise cascade to yield mature proteins. This process is called maturation. Displays maximal activity during the budding process just prior to particle release from the cell. Also cleaves Nef and Vif, probably concomitantly with viral structural proteins on maturation of virus particles. Hydrolyzes host EIF4GI and PABP1 in order to shut off the capped cellular mRNA translation. The resulting inhibition of cellular protein synthesis serves to ensure maximal viral gene expression and to evade host immune response. Also mediates cleavage of host YTHDF3. Mediates cleavage of host CARD8, thereby activating the CARD8 inflammasome, leading to the clearance of latent HIV-1 in patient CD4(+) T-cells after viral reactivation; in contrast, HIV-1 can evade CARD8-sensing when its protease remains inactive in infected cells prior to viral budding. Its function is as follows. Multifunctional enzyme that converts the viral RNA genome into dsDNA in the cytoplasm, shortly after virus entry into the cell. This enzyme displays a DNA polymerase activity that can copy either DNA or RNA templates, and a ribonuclease H (RNase H) activity that cleaves the RNA strand of RNA-DNA heteroduplexes in a partially processive 3' to 5' endonucleasic mode. Conversion of viral genomic RNA into dsDNA requires many steps. A tRNA(3)-Lys binds to the primer-binding site (PBS) situated at the 5'-end of the viral RNA. RT uses the 3' end of the tRNA primer to perform a short round of RNA-dependent minus-strand DNA synthesis. The reading proceeds through the U5 region and ends after the repeated (R) region which is present at both ends of viral RNA. The portion of the RNA-DNA heteroduplex is digested by the RNase H, resulting in a ssDNA product attached to the tRNA primer. This ssDNA/tRNA hybridizes with the identical R region situated at the 3' end of viral RNA. This template exchange, known as minus-strand DNA strong stop transfer, can be either intra- or intermolecular. RT uses the 3' end of this newly synthesized short ssDNA to perform the RNA-dependent minus-strand DNA synthesis of the whole template. RNase H digests the RNA template except for two polypurine tracts (PPTs) situated at the 5'-end and near the center of the genome. It is not clear if both polymerase and RNase H activities are simultaneous. RNase H probably can proceed both in a polymerase-dependent (RNA cut into small fragments by the same RT performing DNA synthesis) and a polymerase-independent mode (cleavage of remaining RNA fragments by free RTs). Secondly, RT performs DNA-directed plus-strand DNA synthesis using the PPTs that have not been removed by RNase H as primers. PPTs and tRNA primers are then removed by RNase H. The 3' and 5' ssDNA PBS regions hybridize to form a circular dsDNA intermediate. Strand displacement synthesis by RT to the PBS and PPT ends produces a blunt ended, linear dsDNA copy of the viral genome that includes long terminal repeats (LTRs) at both ends. In terms of biological role, catalyzes viral DNA integration into the host chromosome, by performing a series of DNA cutting and joining reactions. This enzyme activity takes place after virion entry into a cell and reverse transcription of the RNA genome in dsDNA. The first step in the integration process is 3' processing. This step requires a complex comprising the viral genome, matrix protein, Vpr and integrase. This complex is called the pre-integration complex (PIC). The integrase protein removes 2 nucleotides from each 3' end of the viral DNA, leaving recessed CA OH's at the 3' ends. In the second step, the PIC enters cell nucleus. This process is mediated through integrase and Vpr proteins, and allows the virus to infect a non dividing cell. This ability to enter the nucleus is specific of lentiviruses, other retroviruses cannot and rely on cell division to access cell chromosomes. In the third step, termed strand transfer, the integrase protein joins the previously processed 3' ends to the 5' ends of strands of target cellular DNA at the site of integration. The 5'-ends are produced by integrase-catalyzed staggered cuts, 5 bp apart. A Y-shaped, gapped, recombination intermediate results, with the 5'-ends of the viral DNA strands and the 3' ends of target DNA strands remaining unjoined, flanking a gap of 5 bp. The last step is viral DNA integration into host chromosome. This involves host DNA repair synthesis in which the 5 bp gaps between the unjoined strands are filled in and then ligated. Since this process occurs at both cuts flanking the HIV genome, a 5 bp duplication of host DNA is produced at the ends of HIV-1 integration. Alternatively, Integrase may catalyze the excision of viral DNA just after strand transfer, this is termed disintegration. This chain is Gag-Pol polyprotein (gag-pol), found in Homo sapiens (Human).